The sequence spans 394 residues: Aromatic-amino-acid aminotransferase (394 aa).

Gly-34, Tyr-65, Trp-127, and Asn-180 together coordinate substrate. Lys-243 bears the N6-(pyridoxal phosphate)lysine mark. Arg-371 provides a ligand contact to substrate.

The protein belongs to the class-I pyridoxal-phosphate-dependent aminotransferase family. In terms of assembly, homodimer. The cofactor is pyridoxal 5'-phosphate.

The protein localises to the cytoplasm. It carries out the reaction an aromatic L-alpha-amino acid + 2-oxoglutarate = an aromatic oxo-acid + L-glutamate. In terms of biological role, shows activities toward both dicarboxylic and aromatic substrates. In Paracoccus denitrificans, this protein is Aromatic-amino-acid aminotransferase (tyrB).